A 207-amino-acid polypeptide reads, in one-letter code: MLNKLSRLLDEAGISLTDHQKNQLVAYVGLLDKWNKAYNLTSVRDPNEMLVRHILDSIIVAPYLQGSRFIDVGTGPGLPGIPLAIVCPESHFTLLDSLGKRVRFLRQVQHELKLDNVTPVQSRVEAFPAEPPFDGVISRAFASLNDMVSWCHHLPAANGHFYALKGLAQKEEMESLPEGYDIVEVIELHVPRLEGERHLVVIKPKSS.

Residues glycine 73, leucine 78, valine 124 to glutamate 125, and arginine 139 contribute to the S-adenosyl-L-methionine site.

The protein belongs to the methyltransferase superfamily. RNA methyltransferase RsmG family.

It is found in the cytoplasm. The enzyme catalyses guanosine(527) in 16S rRNA + S-adenosyl-L-methionine = N(7)-methylguanosine(527) in 16S rRNA + S-adenosyl-L-homocysteine. In terms of biological role, specifically methylates the N7 position of guanine in position 527 of 16S rRNA. The protein is Ribosomal RNA small subunit methyltransferase G of Klebsiella pneumoniae subsp. pneumoniae (strain ATCC 700721 / MGH 78578).